The chain runs to 88 residues: Small ribosomal subunit protein uS17 (88 aa).

The protein belongs to the universal ribosomal protein uS17 family. In terms of assembly, part of the 30S ribosomal subunit.

In terms of biological role, one of the primary rRNA binding proteins, it binds specifically to the 5'-end of 16S ribosomal RNA. This Synechococcus sp. (strain WH7803) protein is Small ribosomal subunit protein uS17.